We begin with the raw amino-acid sequence, 1686 residues long: A disintegrin and metalloproteinase with thrombospondin motifs 7 (1686 aa).

A signal peptide spans 1–27 (MPGGPSPRSPAPLLRPLLLLLCALAPG). The propeptide occupies 28–236 (APGPAPGRAT…RPRLRRLHQR (209 aa)). Residue Asn-94 is glycosylated (N-linked (GlcNAc...) asparagine). The Cysteine switch motif lies at 202–209 (STCGVQVY). A Zn(2+)-binding site is contributed by Cys-204. The 211-residue stretch at 242–452 (KWVETLVVAD…GWGLCLDDPP (211 aa)) folds into the Peptidase M12B domain. 11 disulfide bridges follow: Cys-318–Cys-372, Cys-347–Cys-354, Cys-366–Cys-447, Cys-405–Cys-431, Cys-474–Cys-497, Cys-485–Cys-503, Cys-492–Cys-522, Cys-516–Cys-527, Cys-550–Cys-587, Cys-554–Cys-592, and Cys-565–Cys-577. His-388 contacts Zn(2+). Glu-389 is an active-site residue. 2 residues coordinate Zn(2+): His-392 and His-398. The Disintegrin domain occupies 462–537 (VPPGVLYDVS…VPVGFRPEAV (76 aa)). The 56-residue stretch at 538–593 (DGGWSGWSAWSICSRSCGMGVQSAERQCTQPTPKYKGRYCVGERKRFRLCNLQACP) folds into the TSP type-1 1 domain. N-linked (GlcNAc...) asparagine glycosylation is found at Asn-693 and Asn-778. The interval 698-809 (HTVSGTFEEA…PGVHYEYTIH (112 aa)) is spacer. TSP type-1 domains lie at 821–880 (PVFS…QPCP), 881–940 (ARWW…NRHV), and 942–995 (CPAT…PLCR). Disordered regions lie at residues 1024-1043 (HHLA…TMGN), 1080-1257 (PSEE…SPDV), and 1344-1396 (LGHM…PLAP). A compositionally biased stretch (polar residues) spans 1182 to 1205 (DGLQTPATPESQNDFPVGKDSQSQ). The segment covering 1210 to 1226 (WRDRTNEVFKDDEEPKG) has biased composition (basic and acidic residues). Low complexity predominate over residues 1360–1375 (PESLSPEVPLSSRLLS). TSP type-1 domains lie at 1411-1459 (RNAG…RRCH), 1462-1522 (PCAT…QPCL), 1523-1567 (SWYT…PCNT), and 1569-1629 (PCTQ…EDCE). Residues 1632-1672 (EPPRCERDRLSFGFCETLRLLGRCQLPTIRTQCCRSCSPPS) enclose the PLAC domain. Residues 1666 to 1686 (RSCSPPSHGAPSRGHQRVARR) form a disordered region.

In terms of assembly, interacts with COMP. It depends on Zn(2+) as a cofactor. N-glycosylated. Can be O-fucosylated by POFUT2 on a serine or a threonine residue found within the consensus sequence C1-X(2)-(S/T)-C2-G of the TSP type-1 repeat domains where C1 and C2 are the first and second cysteine residue of the repeat, respectively. Fucosylated repeats can then be further glycosylated by the addition of a beta-1,3-glucose residue by the glucosyltransferase, B3GALTL. Fucosylation mediates the efficient secretion of ADAMTS family members. Can also be C-glycosylated with one or two mannose molecules on tryptophan residues within the consensus sequence W-X-X-W of the TPRs. N- and C-glycosylations can also facilitate secretion. Post-translationally, O-glycosylated proteoglycan; contains chondroitin sulfate. In terms of processing, may be cleaved by a furin endopeptidase. The precursor is sequentially processed. In terms of tissue distribution, expressed in heart, brain, placenta, lung, liver, skeletal muscle, kidney and pancreas. Detected in meniscus, bone, tendon, cartilage, synovium, fat and ligaments.

Its subcellular location is the secreted. The protein localises to the extracellular space. The protein resides in the extracellular matrix. Its function is as follows. Metalloprotease. Was previously shown to degrade COMP. However, a later study found no activity against COMP. The protein is A disintegrin and metalloproteinase with thrombospondin motifs 7 (ADAMTS7) of Homo sapiens (Human).